Reading from the N-terminus, the 152-residue chain is Small ribosomal subunit protein uS15 (152 aa).

The protein belongs to the universal ribosomal protein uS15 family. In terms of assembly, part of the 30S ribosomal subunit.

This Saccharolobus solfataricus (strain ATCC 35092 / DSM 1617 / JCM 11322 / P2) (Sulfolobus solfataricus) protein is Small ribosomal subunit protein uS15.